Reading from the N-terminus, the 341-residue chain is Glyceraldehyde-3-phosphate dehydrogenase 2 (341 aa).

Residues 12 to 13, Arg-78, and Thr-120 contribute to the NAD(+) site; that span reads RI. Residues 152 to 154 and Thr-183 each bind D-glyceraldehyde 3-phosphate; that span reads SCT. The Nucleophile role is filled by Cys-153. Asn-184 is an NAD(+) binding site. D-glyceraldehyde 3-phosphate-binding positions include Arg-198, 211 to 212, and Arg-234; that span reads TG. Asn-313 contributes to the NAD(+) binding site.

It belongs to the glyceraldehyde-3-phosphate dehydrogenase family. In terms of assembly, homotetramer.

The protein localises to the cytoplasm. It catalyses the reaction D-glyceraldehyde 3-phosphate + phosphate + NAD(+) = (2R)-3-phospho-glyceroyl phosphate + NADH + H(+). It participates in carbohydrate degradation; glycolysis; pyruvate from D-glyceraldehyde 3-phosphate: step 1/5. Catalyzes the oxidative phosphorylation of glyceraldehyde 3-phosphate (G3P) to 1,3-bisphosphoglycerate (BPG) using the cofactor NAD. The first reaction step involves the formation of a hemiacetal intermediate between G3P and a cysteine residue, and this hemiacetal intermediate is then oxidized to a thioester, with concomitant reduction of NAD to NADH. The reduced NADH is then exchanged with the second NAD, and the thioester is attacked by a nucleophilic inorganic phosphate to produce BPG. In Staphylococcus epidermidis (strain ATCC 12228 / FDA PCI 1200), this protein is Glyceraldehyde-3-phosphate dehydrogenase 2 (gapA2).